Here is a 336-residue protein sequence, read N- to C-terminus: Probable assembly chaperone of rpl4 (336 aa).

TPR repeat units follow at residues 39-72, 75-108, 110-143, and 162-195; these read GRAF…SKNL, DQGY…LERL, IDKG…QPDA, and AEAL…ISRA. A disordered region spans residues 316–336; sequence DEENEEAEWETSENEEEMDED.

Belongs to the ACL4 family.

Its subcellular location is the cytoplasm. It localises to the nucleus. The protein localises to the nucleolus. Acts as a chaperone for the L4 ribosomal subunit encoded by rpl4A and rpl4B, required for hierarchical ribosome assembly. Shields ribosomal protein L4 until timely release and insertion into the pre-ribosome is possible, once ribosomal protein L18 is present. This chain is Probable assembly chaperone of rpl4, found in Schizosaccharomyces pombe (strain 972 / ATCC 24843) (Fission yeast).